Consider the following 1774-residue polypeptide: MESHLNPDGVPRPSYVFSADPIARPLEINFDGVKLDLSHEFSLVASNPAANSLGSKNYLQVCLRIRPFTQSEKEHEAEGCVQVLDSQSVLLKDPQSILGHLSEKSSGQVAQKFSFSKVFGPETSQKEFFLGCIMQPVKDLLEGHSRLIFTYGLTNSGKTYTFQGTEENIGILPRTLNVLFDSLQERLYTKMSFKPHRCREYLKLSSDQEKEESANKNTLLRQIKEVTIHNDSYDVLCGHLTNSLTIPEFEESVNSCDQSSLNVDNIKYSVWVSFFEIYNESIYDLFVPVSSKFQKRKMLRLSQDIKGYSFIKDLQWVQVSDSKEAYRLLKLGVKHQSVAFTKLNNASSRSHSIFTIRILQIEDSEIPRVTRVSELSLCDLAGSERSMKTQNEGERLREAGNINTSLLTLGKCINVLKNSEKSKVQHVPFRESKLTHYFQSFFTGKGKICMIINISQSCSAYDETLNVLKFSTTAQRVYVPDTLSSSQEKSFASNKSLQDVSLDSNLDNKILNVKRKTVSWENSLEDVLENEDLVEDLEENEETQNMETELTDEDSDKSLEECRVSTCHKKNKELLDLIEKLNKRLINENKEKLTLELKIREEVTQEFTQYWSQREADFKETLLHEREILEENAERRLAIFKDLVGKCDSQDEPTNRICDIELETEEAHNYVGVEDIFHSLQDDVTDIKKQAELAHLYITSLVDPQEAIACLQLKFNQVKAELAETKEELIKAQEELKNRESNSLVQALKTSSKVDTSLTSNKSTCNETSEMPKNSRAQTHSERKRLNEDGLQLGEPPAKKGLILVSPPITEEQNKMGEMQQSVSEVVEGNRVLKEKNEELKRLLTIGENELRNEKEEKAELNKQVVSLQQQLRFFEEKNSSLRADVEQIQASYNSAVAELQTQKAVNQEQRDRILKLSQEMETAARSIESNVSQIKQMQTKIDELRSLDSPSHISKIDLLNLQDLSSGAKGDNCLNTSQQLPGGDFSSTWVKEYHTQEISRENSFHASIEAIWEECKEIVKASSKKSHQIQGLEEQIEKLQVEVKGYREENSDLRAQESQGKNRDHQLKEKESLIQQLREELQEKSVSLRVQVQLVAEREQALSELSQDVTCYKAKIKDLEVIVETQKDECKRLVELEQSILEKESAILKLEANLKECEAKHQDHIRTNDLSAKEVKFREEVTRLANNLHDTKQLLQSKEEENEISRQETEKLKEELAANSILTQNLKADLQKKEEDCAELKEKFIDAKKQIEQVQREVSVMRDEEKLLRIKINELEKKKNQYSQDLDMKQRTIQQLKEQLSNQKMEEAVQQYEKVCKDLSVKEKLVEDMRLTLVEQEQTQAEQDRVLEAKSEEADWLATELDKWKEKFKDLETRSNQRLNTGTMDDLDVLTRKFSKLQDELQESEEKYKADRKKWLEEKAVLTTQAKEAENVRNREMRKYADDRERCLKLQNEVETLTAQLAEKNSELQKWREERDQLVTAVETQMKALLSSCKHKDEEIQELRKAAAKSTGTENQTMNPKPEYNDSVDLGGVETEPQSTSLEISRNTAEDGSVVLDSCEVSTENVQSTRFPKPELEIQFTPLQPNKMAVKHPGCPTPVTIKIPKARKRKSGEVEEDLVKCENKKNSTPRSNVKFPVSEHRNSPVKKEQKVSVGPSSKKTYSLRSQASTVSANIASKKREGTLQKFGDFLQHSPTILQSKAKKIIETMSSPKLSTVEVSKENVSQPKKAKRKLYRNEISSPINISGQVILMEQKVKETDHQILKRRLRTRTAK.

In terms of domain architecture, Kinesin motor spans 58–477 (YLQVCLRIRP…LKFSTTAQRV (420 aa)). 152 to 159 (GLTNSGKT) lines the ATP pocket. At S486 the chain carries Phosphoserine. Coiled coils occupy residues 525–601 (EDVL…KIRE) and 705–747 (QEAI…LVQA). The segment covering 538–555 (EENEETQNMETELTDEDS) has biased composition (acidic residues). Disordered regions lie at residues 538-557 (EENE…DSDK) and 740-799 (ESNS…PPAK). The span at 741–778 (SNSLVQALKTSSKVDTSLTSNKSTCNETSEMPKNSRAQ) shows a compositional bias: polar residues. Positions 779-788 (THSERKRLNE) are enriched in basic and acidic residues. The stretch at 824–946 (SEVVEGNRVL…QMQTKIDELR (123 aa)) forms a coiled coil. S950 carries the post-translational modification Phosphoserine. The segment at 1002-1059 (ENSFHASIEAIWEECKEIVKASSKKSHQIQGLEEQIEKLQVEVKGYREENSDLRAQES) is necessary and sufficient for interaction with SHTN1. A coiled-coil region spans residues 1021–1507 (KASSKKSHQI…DEEIQELRKA (487 aa)). A phosphoserine mark is found at S1107 and S1542. Residues 1514–1774 (TENQTMNPKP…KRRLRTRTAK (261 aa)) are interaction with PIN1. The residue at position 1598 (T1598) is a Phosphothreonine; by CDK1. S1612 is subject to Phosphoserine. The tract at residues 1625–1663 (KKNSTPRSNVKFPVSEHRNSPVKKEQKVSVGPSSKKTYS) is disordered. Basic and acidic residues predominate over residues 1638–1651 (VSEHRNSPVKKEQK). A phosphoserine mark is found at S1669 and S1694.

This sequence belongs to the TRAFAC class myosin-kinesin ATPase superfamily. Kinesin family. In terms of assembly, oligomerizes (via kinesin motor domain). Associates with microtubules. Interacts (via C-terminal globular tail region) with PIN1 (via WW domain). Interacts with PRC1. Interacts with SHTN1 (via N-terminus); the interaction is direct and promotes the association of SHTN1 to microtubules in primary neurons. Associates with microtubules. In terms of processing, phosphorylated during mitosis by CDK1. Expressed in the brain (at protein level).

The protein localises to the nucleus. Its subcellular location is the cytoplasm. It is found in the cytoskeleton. It localises to the microtubule organizing center. The protein resides in the centrosome. The protein localises to the nucleolus. Its subcellular location is the nucleoplasm. It is found in the spindle. It localises to the spindle pole. The protein resides in the midbody. The protein localises to the cell projection. Its subcellular location is the axon. It is found in the growth cone. Its function is as follows. Plus-end-directed motor enzyme that is required for completion of cytokinesis. Required for proper midbody organization and abscission in polarized cortical stem cells. Plays a role in the regulation of neuronal polarization by mediating the transport of specific cargos. Participates in the mobilization of SHTN1 and in the accumulation of PIP3 in the growth cone of primary hippocampal neurons in a tubulin and actin-dependent manner. In the developing telencephalon, cooperates with SHTN1 to promote both the transition from the multipolar to the bipolar stage and the radial migration of cortical neurons from the ventricular zone toward the superficial layer of the neocortex. Involved in cerebral cortex growth. Acts as an oncogene for promoting bladder cancer cells proliferation, apoptosis inhibition and carcinogenic progression. This chain is Kinesin-like protein KIF20B, found in Mus musculus (Mouse).